The chain runs to 117 residues: Large ribosomal subunit protein uL18 (117 aa).

It belongs to the universal ribosomal protein uL18 family. Part of the 50S ribosomal subunit; part of the 5S rRNA/L5/L18/L25 subcomplex. Contacts the 5S and 23S rRNAs.

This is one of the proteins that bind and probably mediate the attachment of the 5S RNA into the large ribosomal subunit, where it forms part of the central protuberance. The protein is Large ribosomal subunit protein uL18 of Chromobacterium violaceum (strain ATCC 12472 / DSM 30191 / JCM 1249 / CCUG 213 / NBRC 12614 / NCIMB 9131 / NCTC 9757 / MK).